The chain runs to 500 residues: Lysine--tRNA ligase (500 aa).

Glu-410 and Glu-417 together coordinate Mg(2+).

This sequence belongs to the class-II aminoacyl-tRNA synthetase family. Homodimer. The cofactor is Mg(2+).

The protein resides in the cytoplasm. It catalyses the reaction tRNA(Lys) + L-lysine + ATP = L-lysyl-tRNA(Lys) + AMP + diphosphate. The chain is Lysine--tRNA ligase from Pseudomonas syringae pv. syringae (strain B728a).